The chain runs to 690 residues: Elongation factor G (690 aa).

The tr-type G domain occupies 8 to 283 (EDYRNFGIMA…AVVDYLPSPV (276 aa)). GTP-binding positions include 17 to 24 (AHIDAGKT), 81 to 85 (DTPGH), and 135 to 138 (NKMD).

The protein belongs to the TRAFAC class translation factor GTPase superfamily. Classic translation factor GTPase family. EF-G/EF-2 subfamily.

It is found in the cytoplasm. In terms of biological role, catalyzes the GTP-dependent ribosomal translocation step during translation elongation. During this step, the ribosome changes from the pre-translocational (PRE) to the post-translocational (POST) state as the newly formed A-site-bound peptidyl-tRNA and P-site-bound deacylated tRNA move to the P and E sites, respectively. Catalyzes the coordinated movement of the two tRNA molecules, the mRNA and conformational changes in the ribosome. The sequence is that of Elongation factor G from Rhodopseudomonas palustris (strain BisA53).